Reading from the N-terminus, the 289-residue chain is Rhodopsin (289 aa).

The Extracellular portion of the chain corresponds to 1-7 (YLVNPAG). Residues 8–32 (YAALGAYMFLLILIGFPVNFLTLYV) form a helical membrane-spanning segment. The Cytoplasmic segment spans residues 33-44 (TLEHKKLRTPLN). A helical transmembrane segment spans residues 45–67 (YILLNLAVADLFMVLGGFTTTMY). Residues 68-81 (TSMHGYFVLGRLGC) lie on the Extracellular side of the membrane. Cys-81 and Cys-158 are oxidised to a cystine. Residues 82–104 (NLEGFFATLGGEIALWSLVVLAI) form a helical membrane-spanning segment. Positions 105-107 (ERW) match the 'Ionic lock' involved in activated form stabilization motif. The Cytoplasmic portion of the chain corresponds to 105 to 123 (ERWIVGLKPIRNFRFTEDH). A helical membrane pass occupies residues 124–144 (AIMGLAFSWVMALSCAVPPLA). The Extracellular portion of the chain corresponds to 145–173 (GWLRYIPEGIQGSCGVDYYTRAEGFNNES). N-linked (GlcNAc...) asparagine glycosylation is present at Asn-171. The chain crosses the membrane as a helical span at residues 174-195 (FVIYMFTVHFLIPLSVIFFCYG). Residues 196 to 223 (RLLCAVKEAAAAQQESETTQRAEKEVSR) lie on the Cytoplasmic side of the membrane. A helical membrane pass occupies residues 224–245 (MVVIMVIGFLVCWLPYASVAWW). The Extracellular segment spans residues 246-257 (IFCNQGSDFGPI). A helical membrane pass occupies residues 258–279 (FMTLPSFFAKRPAIYNPMIYIC). Position 267 is an N6-(retinylidene)lysine (Lys-267). Over 280 to 289 (MNKQFRHCMI) the chain is Cytoplasmic.

The protein belongs to the G-protein coupled receptor 1 family. Opsin subfamily. Phosphorylated on some or all of the serine and threonine residues present in the C-terminal region. Post-translationally, contains one covalently linked retinal chromophore.

It localises to the membrane. It is found in the cell projection. The protein localises to the cilium. Its subcellular location is the photoreceptor outer segment. Functionally, photoreceptor required for image-forming vision at low light intensity. While most salt water fish species use retinal as chromophore, most freshwater fish use 3-dehydroretinal, or a mixture of retinal and 3-dehydroretinal. Light-induced isomerization of 11-cis to all-trans retinal triggers a conformational change that activates signaling via G-proteins. Subsequent receptor phosphorylation mediates displacement of the bound G-protein alpha subunit by arrestin and terminates signaling. This is Rhodopsin (rho) from Limnocottus pallidus (Ray-finned fish).